We begin with the raw amino-acid sequence, 73 residues long: uncharacterized protein (73 aa).

The chain crosses the membrane as a helical span at residues 37-57 (AIIITVAVVAFGALTLGAIGA).

It localises to the membrane. This is an uncharacterized protein from Natronomonas pharaonis (strain ATCC 35678 / DSM 2160 / CIP 103997 / JCM 8858 / NBRC 14720 / NCIMB 2260 / Gabara) (Halobacterium pharaonis).